Here is a 501-residue protein sequence, read N- to C-terminus: DEAD-box ATP-dependent RNA helicase 36 (501 aa).

A disordered region spans residues 1-68 (MEVDGEARPF…AAAVTEHAGD (68 aa)). Over residues 36–46 (EEPPNPSPSPA) the composition is skewed to pro residues. The segment covering 59 to 68 (AAAVTEHAGD) has biased composition (low complexity). The short motif at 77–105 (STFAELGLSQWLVDVCDSLGMRVPTAVQR) is the Q motif element. The Helicase ATP-binding domain maps to 108 to 281 (IPRALEGRDV…ELSGNNSYFF (174 aa)). 121 to 128 (AETGSGKT) contacts ATP. The DEAD box motif lies at 229 to 232 (DEAD). The region spanning 292 to 456 (TLKQLYIHVP…AYDGEMRDVN (165 aa)) is the Helicase C-terminal domain. Residues 473 to 486 (MADEGHEDKVQARK) are compositionally biased toward basic and acidic residues. The segment at 473–501 (MADEGHEDKVQARKEQKKRAQERKRKHDE) is disordered. The stretch at 475–501 (DEGHEDKVQARKEQKKRAQERKRKHDE) forms a coiled coil. A compositionally biased stretch (basic residues) spans 487-501 (EQKKRAQERKRKHDE).

It belongs to the DEAD box helicase family. DDX49/DBP8 subfamily.

The enzyme catalyses ATP + H2O = ADP + phosphate + H(+). In Oryza sativa subsp. japonica (Rice), this protein is DEAD-box ATP-dependent RNA helicase 36.